A 497-amino-acid polypeptide reads, in one-letter code: Nuclear pore complex protein npp-16 (497 aa).

Disordered stretches follow at residues 76–95 (VPRR…APRK), 210–308 (TKKS…SAPK), and 359–379 (MENQ…GEYV). 2 stretches are compositionally biased toward basic and acidic residues: residues 231–240 (KDGDKPKETP) and 250–260 (KPAEPSEEPKA). Residues 390-497 (EPDAVLSSKV…FTDKILEVAV (108 aa)) are ranBD1.

Interacts with importin beta imb-1. Interacts with DNA-directed RNA polymerase III subunit rpc-1. Interacts with TATA-box-binding protein tbp-1. Interacts with GTF3C5 homolog tftc-5. Interacts with GTF3C3 homolog tftc-3.

The protein localises to the nucleus. The protein resides in the nuclear pore complex. It localises to the nucleus membrane. Its function is as follows. Component of the nuclear pore complex. Plays a direct role in nuclear protein import. Required for anoxia-induced prophase arrest; may function in concert with cdk-1 to arrest prophase blastomeres in response to anoxia. The polypeptide is Nuclear pore complex protein npp-16 (Caenorhabditis elegans).